The primary structure comprises 84 residues: Dolichol phosphate-mannose biosynthesis regulatory protein (84 aa).

A run of 2 helical transmembrane segments spans residues 11–31 (LGLVALSLIIFTYYTAWVILL) and 49–69 (YAIAIPLAAGHLLLLFVGIFI).

The protein belongs to the DPM2 family. Component of the dolichol-phosphate mannose (DPM) synthase complex composed of DPM1, DPM2 and DPM3; in the complex interacts directly with DPM3. Component of the glycosylphosphatidylinositol-N-acetylglucosaminyltransferase (GPI-GnT) complex composed at least by PIGA, PIGC, PIGH, PIGP, PIGQ, PIGY and DPM2. Interacts with PIGA, PIGC and PIGQ.

It is found in the endoplasmic reticulum membrane. Its pathway is protein modification; protein glycosylation. In terms of biological role, regulates the biosynthesis of dolichol phosphate-mannose. Regulatory subunit of the dolichol-phosphate mannose (DPM) synthase complex; essential for the ER localization and stable expression of DPM1. Part of the glycosylphosphatidylinositol-N-acetylglucosaminyltransferase (GPI-GnT) complex that catalyzes the transfer of N-acetylglucosamine from UDP-N-acetylglucosamine to phosphatidylinositol and participates in the first step of GPI biosynthesis. May act by regulating the GPI-GNT complex. This Bos taurus (Bovine) protein is Dolichol phosphate-mannose biosynthesis regulatory protein.